The sequence spans 484 residues: uncharacterized protein (484 aa).

Low complexity predominate over residues 1-14 (MIDSTSTATATSKT). Residues 1 to 32 (MIDSTSTATATSKTVELNTNGSKTDASSENGT) are disordered. A compositionally biased stretch (polar residues) spans 15–32 (VELNTNGSKTDASSENGT). Lys-305 is modified (N6-(pyridoxal phosphate)lysine).

This sequence belongs to the class-III pyridoxal-phosphate-dependent aminotransferase family. Requires pyridoxal 5'-phosphate as cofactor.

This is an uncharacterized protein from Schizosaccharomyces pombe (strain 972 / ATCC 24843) (Fission yeast).